A 711-amino-acid chain; its full sequence is Zinc finger CCCH domain-containing protein 32 (711 aa).

Positions 1–21 (MEADGAAAAAAAGEASTEAGA) are enriched in low complexity. Residues 1–23 (MEADGAAAAAAAGEASTEAGARP) form a disordered region. C3H1-type zinc fingers lie at residues 31–60 (LRRN…HSDN), 62–88 (RMNP…HPPI), and 112–139 (GKQL…HGPQ). 4 disordered regions span residues 221–246 (KSEK…GDHP), 339–376 (RFNG…HSER), 405–561 (SSLA…EGPK), and 573–701 (AAWA…DDDD). 2 stretches are compositionally biased toward basic and acidic residues: residues 364 to 376 (SERS…HSER) and 413 to 427 (RNGE…YRER). The span at 428–437 (AHGHRSHRDH) shows a compositional bias: basic residues. Composition is skewed to basic and acidic residues over residues 460–509 (SPDR…RRSS) and 585–594 (KQDKSAEVSH). 2 stretches are compositionally biased toward acidic residues: residues 648 to 663 (EDII…DADN) and 686 to 701 (ENAY…DDDD).

In Oryza sativa subsp. japonica (Rice), this protein is Zinc finger CCCH domain-containing protein 32.